A 358-amino-acid chain; its full sequence is D-xylulose reductase A (358 aa).

Zn(2+)-binding residues include Cys-47, His-72, and Glu-73. Gly-182–Gly-187 provides a ligand contact to NAD(+).

This sequence belongs to the zinc-containing alcohol dehydrogenase family. Requires Zn(2+) as cofactor.

The catalysed reaction is xylitol + NAD(+) = D-xylulose + NADH + H(+). It participates in carbohydrate degradation; L-arabinose degradation via L-arabinitol; D-xylulose 5-phosphate from L-arabinose (fungal route): step 4/5. In terms of biological role, xylitol dehydrogenase which catalyzes the conversion of xylitol to D-xylulose. Xylose is a major component of hemicelluloses such as xylan. Most fungi utilize D-xylose via three enzymatic reactions, xylose reductase (XR), xylitol dehydrogenase (XDH), and xylulokinase, to form xylulose 5-phosphate, which enters pentose phosphate pathway. This Aspergillus oryzae (strain ATCC 42149 / RIB 40) (Yellow koji mold) protein is D-xylulose reductase A (xdhA).